A 724-amino-acid polypeptide reads, in one-letter code: Catalase-peroxidase (724 aa).

A cross-link (tryptophyl-tyrosyl-methioninium (Trp-Tyr) (with M-252)) is located at residues 98 to 226 (WHAAGTYRIA…LAAVMMGLIY (129 aa)). Residue His-99 is the Proton acceptor of the active site. Positions 226-252 (YVNPEGVDGNPDPLKTAHDIRVTFERM) form a cross-link, tryptophyl-tyrosyl-methioninium (Tyr-Met) (with W-98). Position 267 (His-267) interacts with heme b.

Belongs to the peroxidase family. Peroxidase/catalase subfamily. In terms of assembly, homodimer or homotetramer. It depends on heme b as a cofactor. In terms of processing, formation of the three residue Trp-Tyr-Met cross-link is important for the catalase, but not the peroxidase activity of the enzyme.

It carries out the reaction H2O2 + AH2 = A + 2 H2O. It catalyses the reaction 2 H2O2 = O2 + 2 H2O. In terms of biological role, bifunctional enzyme with both catalase and broad-spectrum peroxidase activity. This chain is Catalase-peroxidase, found in Psychromonas ingrahamii (strain DSM 17664 / CCUG 51855 / 37).